The following is a 195-amino-acid chain: 7-methyl-GTP pyrophosphatase (195 aa).

The Proton acceptor role is filled by D70.

This sequence belongs to the Maf family. YceF subfamily. A divalent metal cation serves as cofactor.

It localises to the cytoplasm. It catalyses the reaction N(7)-methyl-GTP + H2O = N(7)-methyl-GMP + diphosphate + H(+). Its function is as follows. Nucleoside triphosphate pyrophosphatase that hydrolyzes 7-methyl-GTP (m(7)GTP). May have a dual role in cell division arrest and in preventing the incorporation of modified nucleotides into cellular nucleic acids. The polypeptide is 7-methyl-GTP pyrophosphatase (Shewanella sp. (strain MR-4)).